Consider the following 442-residue polypeptide: D-inositol 3-phosphate glycosyltransferase (442 aa).

Histidine 15 contributes to the 1D-myo-inositol 3-phosphate binding site. Residues 21 to 22 and glycine 29 contribute to the UDP-N-acetyl-alpha-D-glucosamine site; that span reads QP. Residues 26–31, lysine 84, tyrosine 117, threonine 141, and arginine 161 contribute to the 1D-myo-inositol 3-phosphate site; that span reads DAGGMN. UDP-N-acetyl-alpha-D-glucosamine-binding residues include arginine 235, lysine 240, and glutamine 299. Residues tyrosine 308, arginine 309, and serine 311 each coordinate Mg(2+). Positions 321 and 329 each coordinate UDP-N-acetyl-alpha-D-glucosamine. Threonine 335 lines the Mg(2+) pocket.

It belongs to the glycosyltransferase group 1 family. MshA subfamily. In terms of assembly, homodimer.

It carries out the reaction 1D-myo-inositol 3-phosphate + UDP-N-acetyl-alpha-D-glucosamine = 1D-myo-inositol 2-acetamido-2-deoxy-alpha-D-glucopyranoside 3-phosphate + UDP + H(+). In terms of biological role, catalyzes the transfer of a N-acetyl-glucosamine moiety to 1D-myo-inositol 3-phosphate to produce 1D-myo-inositol 2-acetamido-2-deoxy-glucopyranoside 3-phosphate in the mycothiol biosynthesis pathway. This Rhodococcus erythropolis (strain PR4 / NBRC 100887) protein is D-inositol 3-phosphate glycosyltransferase.